A 240-amino-acid chain; its full sequence is Uridylate kinase (240 aa).

13–16 (KASG) contributes to the ATP binding site. The involved in allosteric activation by GTP stretch occupies residues 21–26 (GSQGFG). Gly55 is a binding site for UMP. Gly56 and Arg60 together coordinate ATP. UMP-binding positions include Asp75 and 136 to 143 (TGNPFFTT). ATP is bound by residues Thr163, Gln164, Tyr169, and Asp172.

It belongs to the UMP kinase family. As to quaternary structure, homohexamer.

The protein localises to the cytoplasm. The enzyme catalyses UMP + ATP = UDP + ADP. It functions in the pathway pyrimidine metabolism; CTP biosynthesis via de novo pathway; UDP from UMP (UMPK route): step 1/1. With respect to regulation, allosterically activated by GTP. Inhibited by UTP. Its function is as follows. Catalyzes the reversible phosphorylation of UMP to UDP. The protein is Uridylate kinase of Brucella suis biovar 1 (strain 1330).